We begin with the raw amino-acid sequence, 254 residues long: tRNA pseudouridine synthase A (254 aa).

Residue aspartate 52 is the Nucleophile of the active site. Tyrosine 111 serves as a coordination point for substrate.

The protein belongs to the tRNA pseudouridine synthase TruA family. As to quaternary structure, homodimer.

It catalyses the reaction uridine(38/39/40) in tRNA = pseudouridine(38/39/40) in tRNA. Its function is as follows. Formation of pseudouridine at positions 38, 39 and 40 in the anticodon stem and loop of transfer RNAs. In Rhizorhabdus wittichii (strain DSM 6014 / CCUG 31198 / JCM 15750 / NBRC 105917 / EY 4224 / RW1) (Sphingomonas wittichii), this protein is tRNA pseudouridine synthase A.